A 158-amino-acid polypeptide reads, in one-letter code: Endoribonuclease YbeY (158 aa).

Zn(2+) contacts are provided by His118, His122, and His128.

The protein belongs to the endoribonuclease YbeY family. The cofactor is Zn(2+).

The protein resides in the cytoplasm. Its function is as follows. Single strand-specific metallo-endoribonuclease involved in late-stage 70S ribosome quality control and in maturation of the 3' terminus of the 16S rRNA. The protein is Endoribonuclease YbeY of Alteromonas mediterranea (strain DSM 17117 / CIP 110805 / LMG 28347 / Deep ecotype).